Here is a 433-residue protein sequence, read N- to C-terminus: Protein RETICULATA-RELATED 1, chloroplastic (433 aa).

The transit peptide at 1-63 (MSISLKISHI…LSSRNLRNRC (63 aa)) directs the protein to the chloroplast. An N-acetylvaline modification is found at valine 64. A compositionally biased stretch (acidic residues) spans 93 to 105 (DLEPELDDGDGGD). The tract at residues 93–143 (DLEPELDDGDGGDENGNNDGGGNGGNGDGGGGGGDGEGDDGEDEADKAEEK) is disordered. The span at 110-127 (NDGGGNGGNGDGGGGGGD) shows a compositional bias: gly residues. Acidic residues predominate over residues 128–139 (GEGDDGEDEADK). The next 2 membrane-spanning stretches (helical) occupy residues 249 to 269 (LYAADLLVGLVVDVALVGLLA) and 323 to 343 (LLYGSVGFGCGLIGQGIANLI).

It belongs to the RETICULATA family. In terms of tissue distribution, expressed in root vasculature, distal region of young leaf primordia, leaf bundle sheath cells, hydathodes and pollen grains.

Its subcellular location is the plastid. It localises to the chloroplast membrane. Its function is as follows. May play a role in leaf development. The polypeptide is Protein RETICULATA-RELATED 1, chloroplastic (Arabidopsis thaliana (Mouse-ear cress)).